The following is a 199-amino-acid chain: Peroxynitrite isomerase (199 aa).

The short motif at 20–26 (GVWEGTG) is the GXWXGXG element. His-190 provides a ligand contact to heme b.

It belongs to the nitrobindin family. Homodimer. Heme b is required as a cofactor.

The enzyme catalyses peroxynitrite = nitrate. It participates in nitrogen metabolism. Heme-binding protein able to scavenge peroxynitrite and to protect free L-tyrosine against peroxynitrite-mediated nitration, by acting as a peroxynitrite isomerase that converts peroxynitrite to nitrate. Therefore, this protein likely plays a role in peroxynitrite sensing and in the detoxification of reactive nitrogen and oxygen species (RNS and ROS, respectively). Is able to bind nitric oxide (NO) in vitro, but may act as a sensor of peroxynitrite levels in vivo. This chain is Peroxynitrite isomerase, found in Clavibacter michiganensis subsp. michiganensis (strain NCPPB 382).